The following is a 385-amino-acid chain: A-type ATP synthase subunit C (385 aa).

This sequence belongs to the V-ATPase V0D/AC39 subunit family. In terms of assembly, has multiple subunits with at least A(3), B(3), C, D, E, F, H, I and proteolipid K(x).

It localises to the cell membrane. Functionally, component of the A-type ATP synthase that produces ATP from ADP in the presence of a proton gradient across the membrane. The protein is A-type ATP synthase subunit C of Methanothermobacter thermautotrophicus (strain ATCC 29096 / DSM 1053 / JCM 10044 / NBRC 100330 / Delta H) (Methanobacterium thermoautotrophicum).